A 203-amino-acid chain; its full sequence is MALVNAEKPEVGSSPSSLGPRNKSWVLLMLRFVAFLATAAATIVMAANRETKTFVVATIGSTPIKATVTAKFQHTPAFVFFVIANGMGSIHNLVMIAGDTFVRKFDYKGLRWVTVAILDMLTAALISGGVNAAVFMAELGKNGNSHAKWNKICDRFGSFCDHGGAAIIASFIGLLLMLVISIISIIKLLKPKSPLVDSHVLAP.

Residues 1 to 24 (MALVNAEKPEVGSSPSSLGPRNKS) are Cytoplasmic-facing. The chain crosses the membrane as a helical span at residues 25–45 (WVLLMLRFVAFLATAAATIVM). The Extracellular portion of the chain corresponds to 46 to 76 (AANRETKTFVVATIGSTPIKATVTAKFQHTP). A helical membrane pass occupies residues 77-97 (AFVFFVIANGMGSIHNLVMIA). At 98 to 114 (GDTFVRKFDYKGLRWVT) the chain is on the cytoplasmic side. The chain crosses the membrane as a helical span at residues 115 to 135 (VAILDMLTAALISGGVNAAVF). Residues 136–165 (MAELGKNGNSHAKWNKICDRFGSFCDHGGA) lie on the Extracellular side of the membrane. A helical membrane pass occupies residues 166–186 (AIIASFIGLLLMLVISIISII). At 187–203 (KLLKPKSPLVDSHVLAP) the chain is on the cytoplasmic side.

Belongs to the Casparian strip membrane proteins (CASP) family. As to quaternary structure, homodimer and heterodimers.

It localises to the cell membrane. The sequence is that of CASP-like protein 1B1 from Ricinus communis (Castor bean).